The primary structure comprises 163 residues: Nucleotide-binding protein EAT1b_2037 (163 aa).

This sequence belongs to the YajQ family.

Functionally, nucleotide-binding protein. The chain is Nucleotide-binding protein EAT1b_2037 from Exiguobacterium sp. (strain ATCC BAA-1283 / AT1b).